Here is a 320-residue protein sequence, read N- to C-terminus: Pantothenate kinase (320 aa).

Position 96-103 (96-103) interacts with ATP; sequence GSVAVGKS.

This sequence belongs to the prokaryotic pantothenate kinase family.

It is found in the cytoplasm. It carries out the reaction (R)-pantothenate + ATP = (R)-4'-phosphopantothenate + ADP + H(+). It participates in cofactor biosynthesis; coenzyme A biosynthesis; CoA from (R)-pantothenate: step 1/5. The protein is Pantothenate kinase of Brevibacillus brevis (strain 47 / JCM 6285 / NBRC 100599).